The chain runs to 100 residues: Urease subunit gamma (100 aa).

The protein belongs to the urease gamma subunit family. In terms of assembly, heterotrimer of UreA (gamma), UreB (beta) and UreC (alpha) subunits. Three heterotrimers associate to form the active enzyme.

Its subcellular location is the cytoplasm. It catalyses the reaction urea + 2 H2O + H(+) = hydrogencarbonate + 2 NH4(+). Its pathway is nitrogen metabolism; urea degradation; CO(2) and NH(3) from urea (urease route): step 1/1. This is Urease subunit gamma from Magnetococcus marinus (strain ATCC BAA-1437 / JCM 17883 / MC-1).